Consider the following 220-residue polypeptide: Uracil-DNA glycosylase (220 aa).

Residue Asp-61 is the Proton acceptor of the active site.

Belongs to the uracil-DNA glycosylase (UDG) superfamily. UNG family.

It is found in the cytoplasm. The catalysed reaction is Hydrolyzes single-stranded DNA or mismatched double-stranded DNA and polynucleotides, releasing free uracil.. Excises uracil residues from the DNA which can arise as a result of misincorporation of dUMP residues by DNA polymerase or due to deamination of cytosine. The chain is Uracil-DNA glycosylase from Pseudoalteromonas translucida (strain TAC 125).